The chain runs to 505 residues: Glycerol kinase (505 aa).

Residue Thr14 participates in ADP binding. ATP-binding residues include Thr14, Thr15, and Ser16. Sn-glycerol 3-phosphate is bound at residue Thr14. Arg18 contributes to the ADP binding site. 4 residues coordinate sn-glycerol 3-phosphate: Arg84, Glu85, Tyr136, and Asp246. The glycerol site is built by Arg84, Glu85, Tyr136, Asp246, and Gln247. Residues Thr268 and Gly311 each contribute to the ADP site. ATP-binding residues include Thr268, Gly311, Gln315, and Gly412. 2 residues coordinate ADP: Gly412 and Asn416.

Belongs to the FGGY kinase family.

The catalysed reaction is glycerol + ATP = sn-glycerol 3-phosphate + ADP + H(+). It participates in polyol metabolism; glycerol degradation via glycerol kinase pathway; sn-glycerol 3-phosphate from glycerol: step 1/1. With respect to regulation, inhibited by fructose 1,6-bisphosphate (FBP). Key enzyme in the regulation of glycerol uptake and metabolism. Catalyzes the phosphorylation of glycerol to yield sn-glycerol 3-phosphate. The protein is Glycerol kinase of Vibrio campbellii (strain ATCC BAA-1116).